The chain runs to 155 residues: Small ribosomal subunit protein uS7cz/uS7cy (155 aa).

The protein belongs to the universal ribosomal protein uS7 family. As to quaternary structure, part of the 30S ribosomal subunit.

It localises to the plastid. The protein resides in the chloroplast. Functionally, one of the primary rRNA binding proteins, it binds directly to 16S rRNA where it nucleates assembly of the head domain of the 30S subunit. This Daucus carota (Wild carrot) protein is Small ribosomal subunit protein uS7cz/uS7cy (rps7-A).